Reading from the N-terminus, the 232-residue chain is RNA chaperone ProQ (232 aa).

The interval 105–182 (EAKARVQAQR…REEQHTPVSD (78 aa)) is disordered. The span at 117 to 136 (QQAKKREAAATAGEKEDAPR) shows a compositional bias: basic and acidic residues. Positions 137-146 (RERKPRPTTP) are enriched in basic residues. Over residues 147 to 177 (RRKEGAERKPRAQKPVEKAPKTVKAPREEQH) the composition is skewed to basic and acidic residues.

The protein belongs to the ProQ family.

The protein localises to the cytoplasm. In terms of biological role, RNA chaperone with significant RNA binding, RNA strand exchange and RNA duplexing activities. May regulate ProP activity through an RNA-based, post-transcriptional mechanism. The sequence is that of RNA chaperone ProQ from Escherichia coli (strain K12).